Reading from the N-terminus, the 2126-residue chain is Serine/threonine-protein kinase WNK1 (2126 aa).

Disordered stretches follow at residues 1–80 (MSDG…FFRR) and 93–202 (LPGL…QQQD). Serine 17 carries the phosphoserine modification. Positions 48–64 (RTEEYRRRRHTMDKDSR) are enriched in basic and acidic residues. Position 58 is a phosphothreonine (threonine 58). 2 stretches are compositionally biased toward low complexity: residues 101–111 (PQPSVPAVVPQ) and 127–141 (VASQVSQQPSAAASP). Phosphoserine occurs at positions 165 and 172. A Protein kinase domain is found at 221-479 (LKFDIEIGRG…IKDLLNHAFF (259 aa)). Serine 231 is a binding site for ATP. Chloride contacts are provided by phenylalanine 283 and leucine 299. Residues 301-304 (TELM) and lysine 351 contribute to the ATP site. Aspartate 368 acts as the Proton acceptor in catalysis. Residues leucine 369 and leucine 371 each coordinate chloride. 2 positions are modified to phosphoserine; by autocatalysis: serine 378 and serine 382. An autoinhibitory domain region spans residues 488–555 (ELAEEDDGEK…VCEGDHKTMA (68 aa)). The span at 573 to 588 (QLVREEQEKRKQEESS) shows a compositional bias: basic and acidic residues. Residues 573–865 (QLVREEQEKR…SRHEKTSRPK (293 aa)) form a disordered region. Residues 593-614 (NEQQASVSQAGIQPLSVASTGI) show a composition bias toward polar residues. Positions 615 to 626 (PTAPTTSASVST) are enriched in low complexity. Residues 629–639 (EPEEPEADQHQ) are interaction with KLHL3. 3 stretches are compositionally biased toward polar residues: residues 638-682 (HQQL…GSQH), 695-705 (TVSSIQAQSQP), and 713-733 (SMAQGQNQGQPSSSLAGVLSS). Low complexity predominate over residues 734–746 (QPVQHPQQQGIQP). A compositionally biased stretch (polar residues) spans 750–789 (PQQAVQYSLPQAASSSEGTVQPVSQPQVSAGTQSSTQGVS). A compositionally biased stretch (low complexity) spans 793 to 823 (PPEQTPITQSQPTQPVPLVSSVDSAHSDVAS). Polar residues predominate over residues 826–836 (SDGNENAPSSS). The segment covering 844-865 (TKRHYRKSVRSRSRHEKTSRPK) has biased composition (basic residues). The RFXV motif 1 signature appears at 1003-1006 (RFIV). Serine 1007 carries the post-translational modification Phosphoserine. 2 disordered regions span residues 1474–1507 (GQVSTPGTHASAPASTATGAKPGTTPPKPSLTKT) and 1557–1595 (IPVTPAVGPLSTMSSTAVTEAGSQPQKDGTEVHVTASSS). Over residues 1477 to 1496 (STPGTHASAPASTATGAKPG) the composition is skewed to low complexity. The segment covering 1567–1583 (STMSSTAVTEAGSQPQK) has biased composition (polar residues). Residues 1604 to 1607 (RFQV) carry the RFXV motif 2 motif. The segment at 1610-1695 (TMDDAQKERK…TKVGRFQVTT (86 aa)) is disordered. Basic and acidic residues predominate over residues 1613–1629 (DAQKERKNRSEDTKSVH). Positions 1632–1650 (SSTSESSVLSSSSPESTLV) are enriched in low complexity. 2 consecutive short sequence motifs (RFXV motif) follow at residues 1690-1693 (RFQV) and 1702-1705 (RFSV). Over residues 1709 to 1719 (EDKVTELKKEG) the composition is skewed to basic and acidic residues. Disordered regions lie at residues 1709–1783 (EDKV…LCSK), 1856–1940 (VIIP…NLYS), and 1952–1990 (SLSAPGQGTSSTNTVGGTVSSQAAQAQPPAMTSSRKGTF). Residue serine 1723 is modified to Phosphoserine. Over residues 1738 to 1747 (PKKEKPELAE) the composition is skewed to basic and acidic residues. Serine 1755, serine 1756, serine 1771, serine 1773, serine 1776, and serine 1865 each carry phosphoserine. The span at 1866-1878 (GRRRRPTKSKGSK) shows a compositional bias: basic residues. Residues 1879 to 1889 (SSRSSSLGNKS) are compositionally biased toward low complexity. The segment covering 1890–1940 (PQLSGNLSGQSGTSVLNPQQTLHPPGNTPETGHNQLLQPLKPSPSSDNLYS) has biased composition (polar residues). Over residues 1957–1981 (GQGTSSTNTVGGTVSSQAAQAQPPA) the composition is skewed to low complexity. The segment at 1985 to 2005 (SRKGTFTDDLHKLVDNWARDA) is amphipathic alpha-helix. Phosphoserine occurs at positions 2014 and 2030. Positions 2076-2097 (PFGTQWSGTGGPAPQPLGQFQP) are disordered. Phosphoserine is present on residues serine 2114 and serine 2116.

The protein belongs to the protein kinase superfamily. Ser/Thr protein kinase family. WNK subfamily. In terms of assembly, interacts with WNK3. Interacts with WNK4; inhibiting the activity of WNK4. Interacts with SGK1; promoting its activation. Associates with the mTORC2 complex. Interacts with UVRAG. Interacts (via amphipathic alpha-helix region) with EMC2; promoting the ER membrane protein complex assembly. Interacts with isoform 1; inhibiting isoform 1 activity. Requires Mg(2+) as cofactor. Autophosphorylated at Ser-378 and Ser-382, promoting its activity. Autophosphorylation at Ser-382 is inhibited by intracellular calcium. Phosphorylation at Thr-58 increases ability to activate SGK1. In terms of processing, ubiquitinated by the BCR(KLHL3) complex, leading to its degradation. Also ubiquitinated by the BCR(KLHL2) complex. Post-translationally, may be O-glycosylated.

The protein localises to the cytoplasm. It is found in the nucleus. Its subcellular location is the cytoskeleton. It localises to the spindle. It catalyses the reaction L-seryl-[protein] + ATP = O-phospho-L-seryl-[protein] + ADP + H(+). It carries out the reaction L-threonyl-[protein] + ATP = O-phospho-L-threonyl-[protein] + ADP + H(+). Its activity is regulated as follows. Activated in response to hyperosmotic stress: cell shrinkage promotes formation of a membraneless compartment that concentrates WNK1 with its substrates, OXSR1/OSR1 and STK39/SPAK. Activation requires autophosphorylation of Ser-382 and, to a lower extent, Ser-378. Autophosphorylation and subsequent activation is inhibited by increases in intracellular ionic strength: Cl(-) potently inhibits WNK1 kinase activity via direct binding. Also inhibited by K(+) ions. Inhibited by Compound 12 ((5-Chloro-2-(2-((methyl-d3)amino)thiazol-4-yl)- pyridin-4-yl)(4-(4-chlorobenzyl)piperazin-1-yl)methanone). Its function is as follows. Serine/threonine-protein kinase component of the WNK1-SPAK/OSR1 kinase cascade, which acts as a key regulator of blood pressure and regulatory volume increase by promoting ion influx. WNK1 mediates regulatory volume increase in response to hyperosmotic stress by acting as a molecular crowding sensor, which senses cell shrinkage and mediates formation of a membraneless compartment by undergoing liquid-liquid phase separation. The membraneless compartment concentrates WNK1 with its substrates, OXSR1/OSR1 and STK39/SPAK, promoting WNK1-dependent phosphorylation and activation of downstream kinases OXSR1/OSR1 and STK39/SPAK. Following activation, OXSR1/OSR1 and STK39/SPAK catalyze phosphorylation of ion cotransporters SLC12A1/NKCC2, SLC12A2/NKCC1, SLC12A5/KCC2 and SLC12A6/KCC3, regulating their activity. Phosphorylation of Na-K-Cl cotransporters SLC12A2/NKCC1 and SLC12A2/NKCC1 promote their activation and ion influx; simultaneously, phosphorylation of K-Cl cotransporters SLC12A5/KCC2 and SLC12A6/KCC3 inhibit their activity, blocking ion efflux. Also acts as a regulator of angiogenesis in endothelial cells. Also acts independently of the WNK1-SPAK/OSR1 kinase cascade by catalyzing phosphorylation of other substrates, such as SYT2, PCF11 and NEDD4L. Mediates phosphorylation of SYT2, regulating SYT2 association with phospholipids and membrane-binding. Regulates mRNA export in the nucleus by mediating phosphorylation of PCF11, thereby decreasing the association between PCF11 and POLR2A/RNA polymerase II and promoting mRNA export to the cytoplasm. Acts as a negative regulator of autophagy. Required for the abscission step during mitosis, independently of the WNK1-SPAK/OSR1 kinase cascade. WNK1 may also play a role in actin cytoskeletal reorganization. Also acts as a scaffold protein independently of its protein kinase activity: negatively regulates cell membrane localization of various transporters and channels, such as SLC4A4, SLC26A6, SLC26A9, TRPV4 and CFTR. Involved in the regulation of epithelial Na(+) channel (ENaC) by promoting activation of SGK1 in a kinase-independent manner. Probably activates SGK1 by acting as a scaffold protein that promotes the recruitment of SGK1 to the mTORC2 complex in response to chloride, leading to mTORC2-dependent phosphorylation and activation of SGK1. Acts as an assembly factor for the ER membrane protein complex independently of its protein kinase activity: associates with EMC2 in the cytoplasm via its amphipathic alpha-helix, and prevents EMC2 ubiquitination and subsequent degradation, thereby promoting EMC2 stabilization. Kinase-defective isoform specifically expressed in kidney, which acts as a dominant-negative regulator of the longer isoform 1. Does not directly inhibit WNK4 and has no direct effect on sodium and chloride ion transport. Down-regulates sodium-chloride cotransporter activity indirectly by inhibiting isoform 1, it associates with isoform 1 and attenuates its kinase activity. In kidney, may play an important role regulating sodium and potassium balance. Functionally, kinase-defective isoform produced by alternative promoter usage and alternative splicing. In Rattus norvegicus (Rat), this protein is Serine/threonine-protein kinase WNK1.